The chain runs to 96 residues: Large ribosomal subunit protein eL14 (96 aa).

The protein belongs to the eukaryotic ribosomal protein eL14 family.

The polypeptide is Large ribosomal subunit protein eL14 (Saccharolobus islandicus (strain M.14.25 / Kamchatka #1) (Sulfolobus islandicus)).